A 199-amino-acid chain; its full sequence is Probable chemoreceptor glutamine deamidase CheD (199 aa).

This sequence belongs to the CheD family.

It carries out the reaction L-glutaminyl-[protein] + H2O = L-glutamyl-[protein] + NH4(+). Probably deamidates glutamine residues to glutamate on methyl-accepting chemotaxis receptors (MCPs), playing an important role in chemotaxis. The chain is Probable chemoreceptor glutamine deamidase CheD from Cereibacter sphaeroides (strain ATCC 17023 / DSM 158 / JCM 6121 / CCUG 31486 / LMG 2827 / NBRC 12203 / NCIMB 8253 / ATH 2.4.1.) (Rhodobacter sphaeroides).